The following is a 243-amino-acid chain: Pyrimidodiazepine synthase (243 aa).

A GST N-terminal domain is found at 20-102 (GILRLYSMRF…YLDEQYPLRP (83 aa)). Cysteine 30 serves as the catalytic Nucleophile. Glutathione-binding positions include lysine 57, valine 70, and 86 to 87 (ES). The GST C-terminal domain maps to 107 to 230 (DPLKKVQDKL…VQAEFLRTRS (124 aa)).

It belongs to the GST superfamily. Omega family. In terms of assembly, homodimer.

It carries out the reaction 2-amino-6-acetyl-3,7,8,9-tetrahydro-3H-pyrimido[4,5-b][1,4]diazepin-4-one + glutathione disulfide + H2O = 6-pyruvoyl-5,6,7,8-tetrahydropterin + 2 glutathione. Mediates the conversion of 2-amino-4-oxo-6-pyruvoyl-5,6,7,8-tetrahydropteridine (6-PTP; also named 6-pyruvoyltetrahydropterin) to 2-amino-6-acetyl-3,7,8,9-tetrahydro-3H-pyrimido(4,5-b)[1,4]diazepin-4-one (pyrimidodiazepine or PDA), a key intermediate in red eye pigment drosopterin biosynthesis. This Drosophila melanogaster (Fruit fly) protein is Pyrimidodiazepine synthase.